The sequence spans 508 residues: Monocarboxylate transporter 9 (508 aa).

The Cytoplasmic segment spans residues 1–12 (MEFQKSPDGGWG). 12 helical membrane-spanning segments follow: residues 13 to 33 (WVIV…PLAV), 53 to 73 (WVGS…SLFV), 80 to 100 (PVTI…SLAP), 102 to 122 (IYFL…LLYT), 137 to 157 (GLAL…YAAL), 164 to 184 (FYGL…ILAC), 303 to 323 (VFSA…PPSL), 341 to 361 (MPLI…LGIL), 370 to 390 (LYLY…IPFA), 396 to 416 (LAIL…FPYV), 431 to 451 (GILM…VGWF), and 460 to 480 (IAFY…LLAI). Topologically, residues 481-508 (LPCWDMCNKKLPKPAVPTTFFYKVASNV) are cytoplasmic.

It belongs to the major facilitator superfamily. Monocarboxylate porter (TC 2.A.1.13) family.

It localises to the cell membrane. It carries out the reaction creatine(in) = creatine(out). The catalysed reaction is (R)-carnitine(in) = (R)-carnitine(out). Extracellular pH-and Na(+)-sensitive low-affinity creatine transporter. Also functions as a pH-independent carnitine efflux transporter. The polypeptide is Monocarboxylate transporter 9 (Slc16a9) (Mus musculus (Mouse)).